Consider the following 117-residue polypeptide: UPF0122 protein Teth514_1714 (117 aa).

The protein belongs to the UPF0122 family.

In terms of biological role, might take part in the signal recognition particle (SRP) pathway. This is inferred from the conservation of its genetic proximity to ftsY/ffh. May be a regulatory protein. This chain is UPF0122 protein Teth514_1714, found in Thermoanaerobacter sp. (strain X514).